The sequence spans 257 residues: Protein YIPF5 (257 aa).

At 1–124 (MSGFENLNTD…KVADGSIMNE (124 aa)) the chain is on the cytoplasmic side. Positions 75-106 (PASPQPFYGNNFEDEPPLLEELGINFDHIWQK) are interaction with Sec23. A helical membrane pass occupies residues 125 to 145 (TDLAGPMVFCLAFGATLLLAG). Lysine 146 is a topological domain (lumenal). A helical transmembrane segment spans residues 147–167 (IQFGYVYGISAIGCLGMFCLL). Over 168–173 (NLMSMT) the chain is Cytoplasmic. The chain crosses the membrane as a helical span at residues 174-194 (GVSFGCVASVLGYCLLPMILL). At 195–196 (SS) the chain is on the lumenal side. The chain crosses the membrane as a helical span at residues 197-217 (FAVIFSLQGMVGIILTAGIIG). Over 218–236 (WCSFSASKIFISALAMEGQ) the chain is Cytoplasmic. The helical transmembrane segment at 237-257 (QLLVAYPCALLYGVFALISVF) threads the bilayer.

This sequence belongs to the YIP1 family. In terms of assembly, interacts with the COPII coat components Sec23 (SEC23A and/or SEC23B) and Sec24 (SEC24A and/or SEC24B). Interacts with YIF1A. May interact with RAB1A. Interacts with YIPF3 and YIPF4. Ubiquitously expressed with abundant expression in pancreatic tissue, islets, beta cells, and brain. Highly expressed in coronary smooth muscles.

It localises to the endoplasmic reticulum membrane. The protein localises to the golgi apparatus. The protein resides in the cis-Golgi network membrane. Its subcellular location is the cytoplasmic vesicle. It is found in the COPII-coated vesicle. Plays a role in transport between endoplasmic reticulum and Golgi. In pancreatic beta cells, required to transport proinsulin from endoplasmic reticulum into the Golgi. The polypeptide is Protein YIPF5 (Homo sapiens (Human)).